The primary structure comprises 155 residues: Protein E6 (155 aa).

Zinc fingers lie at residues 33–69 (CVYCKKELTSLELYRFACIELKLVYRNNWPYAVCRVC) and 106–142 (CYRCQCPLTPEEKQLHCEHKRRFHYIAYAWTGSCLQC).

The protein belongs to the papillomaviridae E6 protein family. Forms homodimers. Interacts with ubiquitin-protein ligase UBE3A/E6-AP; this interaction stimulates UBE3A ubiquitin activity. Interacts with host TP53 and EP300; this interaction inhibits TP53 activity.

The protein localises to the host cytoplasm. Its subcellular location is the host nucleus. Plays a major role in the induction and maintenance of cellular transformation. E6 associates with host UBE3A/E6-AP ubiquitin-protein ligase and modulates its activity. Sequesters tumor suppressor TP53 in the host cytoplasm and modulates its activity by interacting with host EP300 that results in the reduction of TP53 acetylation and activation. In turn, apoptosis induced by DNA damage is inhibited. E6 also protects host keratinocytes from apoptosis by mediating the degradation of host BAK1. May also inhibit host immune response. This Homo sapiens (Human) protein is Protein E6.